The chain runs to 307 residues: Putative lipid kinase SERP0390 (307 aa).

Residues 3-139 (QPYNHGVLFY…YDVLKVNDLY (137 aa)) form the DAGKc domain. ATP-binding positions include Ser-44, 74–80 (GDGTLNE), and Thr-101. Mg(2+)-binding residues include Ser-220, Asp-223, and Arg-225. The Proton acceptor role is filled by Glu-281.

It belongs to the diacylglycerol/lipid kinase family. Requires Mg(2+) as cofactor.

May catalyze the ATP-dependent phosphorylation of lipids other than diacylglycerol (DAG). This is Putative lipid kinase SERP0390 from Staphylococcus epidermidis (strain ATCC 35984 / DSM 28319 / BCRC 17069 / CCUG 31568 / BM 3577 / RP62A).